A 142-amino-acid polypeptide reads, in one-letter code: Large ribosomal subunit protein uL13 (142 aa).

Belongs to the universal ribosomal protein uL13 family. Part of the 50S ribosomal subunit.

In terms of biological role, this protein is one of the early assembly proteins of the 50S ribosomal subunit, although it is not seen to bind rRNA by itself. It is important during the early stages of 50S assembly. The protein is Large ribosomal subunit protein uL13 of Baumannia cicadellinicola subsp. Homalodisca coagulata.